The chain runs to 173 residues: Copper transport protein ctr5 (173 aa).

Residues 1-54 (MSLSKMSMSGMSGMGMGSSSNSSAATCRMSMLWNWYIHDSCFLAKSWHINTGNK) lie on the Extracellular side of the membrane. A helical membrane pass occupies residues 55–75 (FAGSIIGIFFFAVAIEGLSLV). Residues 76–135 (QRMFDRWIVAHSNGKTLSGPLRIFFPSSTVHVTVWQQLIRAAMYSSFYLSATILMLIVMS) lie on the Cytoplasmic side of the membrane. A helical membrane pass occupies residues 136–156 (FNGYAILFGFVGAWIGFFLFA). Topologically, residues 157 to 173 (SDTYGTPSTGTGCCESR) are extracellular.

It belongs to the copper transporter (Ctr) (TC 1.A.56) family. SLC31A subfamily. Interacts with ctr4.

It is found in the membrane. In terms of biological role, required for high affinity copper (probably reduced Cu I) transport into the cell. In Schizosaccharomyces pombe (strain 972 / ATCC 24843) (Fission yeast), this protein is Copper transport protein ctr5 (ctr5).